The primary structure comprises 442 residues: UDP-N-acetylmuramate--L-alanine ligase (442 aa).

109–115 (GAHGKTS) provides a ligand contact to ATP.

It belongs to the MurCDEF family.

It localises to the cytoplasm. It carries out the reaction UDP-N-acetyl-alpha-D-muramate + L-alanine + ATP = UDP-N-acetyl-alpha-D-muramoyl-L-alanine + ADP + phosphate + H(+). Its pathway is cell wall biogenesis; peptidoglycan biosynthesis. In terms of biological role, cell wall formation. This Streptococcus pyogenes serotype M3 (strain SSI-1) protein is UDP-N-acetylmuramate--L-alanine ligase.